A 65-amino-acid polypeptide reads, in one-letter code: Large ribosomal subunit protein bL28 (65 aa).

Belongs to the bacterial ribosomal protein bL28 family.

The chain is Large ribosomal subunit protein bL28 from Pseudothermotoga lettingae (strain ATCC BAA-301 / DSM 14385 / NBRC 107922 / TMO) (Thermotoga lettingae).